Here is a 93-residue protein sequence, read N- to C-terminus: Alpha-defensin 26 (93 aa).

A signal peptide spans 1–19 (MKTLVLLSALFLLAFQVQA). Residues 20-58 (DPIQNTDEETNTEVQPQEEDQAVSVSFGNPEGSDLQEES) constitute a propeptide that is removed on maturation. The disordered stretch occupies residues 24-55 (NTDEETNTEVQPQEEDQAVSVSFGNPEGSDLQ). Residues 25 to 40 (TDEETNTEVQPQEEDQ) are compositionally biased toward acidic residues. Disulfide bonds link Cys-64/Cys-92, Cys-66/Cys-81, and Cys-71/Cys-91.

It belongs to the alpha-defensin family.

It is found in the secreted. May have microbicidal activities. This chain is Alpha-defensin 26 (Defa26), found in Mus musculus (Mouse).